Consider the following 166-residue polypeptide: Cyanate hydratase (166 aa).

Active-site residues include Arg-106, Glu-109, and Ser-132.

The protein belongs to the cyanase family.

It catalyses the reaction cyanate + hydrogencarbonate + 3 H(+) = NH4(+) + 2 CO2. Catalyzes the reaction of cyanate with bicarbonate to produce ammonia and carbon dioxide. This Verticillium alfalfae (strain VaMs.102 / ATCC MYA-4576 / FGSC 10136) (Verticillium wilt of alfalfa) protein is Cyanate hydratase.